The primary structure comprises 658 residues: ATP-dependent RNA helicase MSS116, mitochondrial (658 aa).

A mitochondrion-targeting transit peptide spans 1-35 (MFRVTGIATARAVALQPFRAPLGVIRRFGISATAS). Basic and acidic residues predominate over residues 40-79 (HGHDMQSRNGSRWDSRRQGDRRSSRWEGRGSDREDGERGS). The tract at residues 40–104 (HGHDMQSRNG…DGAAREGFSL (65 aa)) is disordered. A Q motif motif is present at residues 126–154 (TLVEEGVLSNELYEMLQSRGFDKLTPVQQ). Positions 158-343 (KPILQTEHDV…NSIMNHAKCL (186 aa)) constitute a Helicase ATP-binding domain. 171–178 (AKTGTGKT) contacts ATP. The DEAD box signature appears at 284 to 287 (DEAD). The 157-residue stretch at 372 to 528 (NITASLYKIR…TFDAAAQELS (157 aa)) folds into the Helicase C-terminal domain.

This sequence belongs to the DEAD box helicase family. DDX18/HAS1 subfamily.

It is found in the mitochondrion matrix. The enzyme catalyses ATP + H2O = ADP + phosphate + H(+). In terms of biological role, ATP-dependent RNA helicase required for mitochondrial splicing of group I and II introns. Also required for efficient mitochondrial translation. This chain is ATP-dependent RNA helicase MSS116, mitochondrial (MSS116), found in Eremothecium gossypii (strain ATCC 10895 / CBS 109.51 / FGSC 9923 / NRRL Y-1056) (Yeast).